An 82-amino-acid chain; its full sequence is Small ribosomal subunit protein bS16 (82 aa).

Belongs to the bacterial ribosomal protein bS16 family.

In Vibrio parahaemolyticus serotype O3:K6 (strain RIMD 2210633), this protein is Small ribosomal subunit protein bS16.